Reading from the N-terminus, the 241-residue chain is uncharacterized protein (241 aa).

Transmembrane regions (helical) follow at residues 1–21 (MMMA…GILL), 43–63 (FPII…LKNL), 75–95 (LPIY…FYAI), 108–128 (IYVL…VLML), 160–180 (VLTS…HGLL), and 200–220 (ILVI…IASG).

It to M.jannaschii MJ0871, MJ0880 and MJ1556.

It localises to the cell membrane. This is an uncharacterized protein from Methanocaldococcus jannaschii (strain ATCC 43067 / DSM 2661 / JAL-1 / JCM 10045 / NBRC 100440) (Methanococcus jannaschii).